The sequence spans 159 residues: Phosphopantetheine adenylyltransferase (159 aa).

Ser-9 is a binding site for substrate. ATP contacts are provided by residues 9–10 (SF) and His-17. Substrate contacts are provided by Lys-41, Leu-73, and Lys-87. Residues 88–90 (GLR), Glu-98, and 122–128 (YSFLSSS) each bind ATP.

The protein belongs to the bacterial CoaD family. As to quaternary structure, homohexamer. The cofactor is Mg(2+).

The protein localises to the cytoplasm. The catalysed reaction is (R)-4'-phosphopantetheine + ATP + H(+) = 3'-dephospho-CoA + diphosphate. The protein operates within cofactor biosynthesis; coenzyme A biosynthesis; CoA from (R)-pantothenate: step 4/5. In terms of biological role, reversibly transfers an adenylyl group from ATP to 4'-phosphopantetheine, yielding dephospho-CoA (dPCoA) and pyrophosphate. The sequence is that of Phosphopantetheine adenylyltransferase from Streptomyces griseus subsp. griseus (strain JCM 4626 / CBS 651.72 / NBRC 13350 / KCC S-0626 / ISP 5235).